The primary structure comprises 606 residues: Threonine dehydratase 1 biosynthetic, chloroplastic (606 aa).

Lys-154 carries the N6-(pyridoxal phosphate)lysine modification. ACT-like domains are found at residues 432-504 and 526-597; these read AVLA…NLTD and LLCR…MESL.

It belongs to the serine/threonine dehydratase family. Pyridoxal 5'-phosphate serves as cofactor. Expressed constitutively in all tissues examined including root, stem, petiole, leaf, immature flower bud, unopened flower and opened flower with the highest expression in opened flower and lowest in leaf.

The protein resides in the plastid. It is found in the chloroplast. It catalyses the reaction L-threonine = 2-oxobutanoate + NH4(+). Its pathway is amino-acid biosynthesis; L-isoleucine biosynthesis; 2-oxobutanoate from L-threonine: step 1/1. Strongly inhibited by 1 mM isoleucine. Has a housekeeping role in isoleucine biosynthesis. The chain is Threonine dehydratase 1 biosynthetic, chloroplastic from Solanum lycopersicum (Tomato).